The sequence spans 229 residues: Indole-3-glycerol phosphate synthase (229 aa).

Belongs to the TrpC family.

It carries out the reaction 1-(2-carboxyphenylamino)-1-deoxy-D-ribulose 5-phosphate + H(+) = (1S,2R)-1-C-(indol-3-yl)glycerol 3-phosphate + CO2 + H2O. It participates in amino-acid biosynthesis; L-tryptophan biosynthesis; L-tryptophan from chorismate: step 4/5. The chain is Indole-3-glycerol phosphate synthase from Pyrococcus abyssi (strain GE5 / Orsay).